The chain runs to 123 residues: Small ribosomal subunit protein uS12 (123 aa).

Position 89 is a 3-methylthioaspartic acid (Asp89).

This sequence belongs to the universal ribosomal protein uS12 family. As to quaternary structure, part of the 30S ribosomal subunit. Contacts proteins S8 and S17. May interact with IF1 in the 30S initiation complex.

Its function is as follows. With S4 and S5 plays an important role in translational accuracy. Interacts with and stabilizes bases of the 16S rRNA that are involved in tRNA selection in the A site and with the mRNA backbone. Located at the interface of the 30S and 50S subunits, it traverses the body of the 30S subunit contacting proteins on the other side and probably holding the rRNA structure together. The combined cluster of proteins S8, S12 and S17 appears to hold together the shoulder and platform of the 30S subunit. This chain is Small ribosomal subunit protein uS12, found in Syntrophotalea carbinolica (strain DSM 2380 / NBRC 103641 / GraBd1) (Pelobacter carbinolicus).